Consider the following 231-residue polypeptide: Probable methylthioribulose-1-phosphate dehydratase (231 aa).

Position 82 (Cys82) interacts with substrate. Residues His100 and His102 each coordinate Zn(2+). Glu123 serves as the catalytic Proton donor/acceptor. Position 181 (His181) interacts with Zn(2+).

This sequence belongs to the aldolase class II family. MtnB subfamily. The cofactor is Zn(2+).

Its subcellular location is the cytoplasm. The enzyme catalyses 5-(methylsulfanyl)-D-ribulose 1-phosphate = 5-methylsulfanyl-2,3-dioxopentyl phosphate + H2O. The protein operates within amino-acid biosynthesis; L-methionine biosynthesis via salvage pathway; L-methionine from S-methyl-5-thio-alpha-D-ribose 1-phosphate: step 2/6. Its function is as follows. Catalyzes the dehydration of methylthioribulose-1-phosphate (MTRu-1-P) into 2,3-diketo-5-methylthiopentyl-1-phosphate (DK-MTP-1-P). In Dictyostelium discoideum (Social amoeba), this protein is Probable methylthioribulose-1-phosphate dehydratase.